Reading from the N-terminus, the 815-residue chain is MTHNLGMAPYRLPGPAGGLCPPDFKPPPPTDIISAPSNPKKRRKTSSAANSAAAVAAAAAAAAAANSMQQQQAPPTPQDLLPPPPMGGFGDTIIASNPFDDSPQVSAMSSSAAAAMAAMNQMGGGPGGGHFGGGGPGGHPHWEDRMGMGGGPPPPPHMHPHMHPHHPGGPMGHPHGPHPHMGGPPPMRGMSPMHPHQMGPGPGVGLPPHMNHGRPGGPGGPGGPVPMGSPMGGIAGMGGMSPMGGMGGPSISPHHMGMGGLSPMGGGPNGPNPRAMQGSPMGGPGQNSPMNSLPMGSPMGNPIGSPLGPPSGPGPGNPGNTGGPQQQQQQPPQPPMNNGQMGPPPLHSPLGNGPTGHGSHMPGGPIPGPGPGPGGLVGPGGISPAHGNNPGGSGNNMLGGNPGGGNSNNNGSNTSNASNNNQNPHLSPAAGRLGVPTSMQSNGPSVSSVASSSVPSPATPTLTPTSTATSMSTSVPTSSPAPPAMSPHHSLNSAGPSPGMPNSGPSPLQSPAGPNGPNNNNSNNNNGPMMGQMIPNAVPMQHQQHMGGGPPGHGPGPMPGMGMNQMLPPQQPSHLGPPHPNMMNHPHHPHHHPGGPPPHMMGGPGMHGGPAGMPPHMGGGPNPHMMGGPHGNAGPHMGHGHMGGVPGPGPGPGGMNGPPHPHMSPHHGHPHHHHNPMGGPGPNMFGGGGGGPMGPGGPMGNMGPMGGGPMGGPMGVGPKPMTMGGGKMYPPGQPMVFNPQNPNAPPIYPCGMCHKEVNDNDEAVFCESGCNFFFHRTCVGLTEAAFQMLNKEVFAEWCCDKCVSSKHIPMVKFKC.

Disordered stretches follow at residues 1–107 and 147–711; these read MTHN…QVSA and GMGG…GPMG. A Nuclear localization signal motif is present at residues 39–45; sequence PKKRRKT. Residues 46–73 are compositionally biased toward low complexity; the sequence is SSAANSAAAVAAAAAAAAAANSMQQQQA. Pro residues predominate over residues 74 to 86; the sequence is PPTPQDLLPPPPM. Residues 188–199 show a composition bias toward low complexity; sequence RGMSPMHPHQMG. 2 stretches are compositionally biased toward gly residues: residues 230–248 and 257–269; these read PMGG…GMGG and GMGG…GGPN. The span at 307-316 shows a compositional bias: pro residues; the sequence is LGPPSGPGPG. Composition is skewed to low complexity over residues 323–341, 407–424, 444–478, and 495–545; these read GPQQ…NGQM, SNNN…NQNP, PSVS…VPTS, and GPSP…HQQH. Positions 569 to 580 are enriched in pro residues; it reads PQQPSHLGPPHP. Positions 602-621 are enriched in gly residues; sequence GGPGMHGGPAGMPPHMGGGP. A compositionally biased stretch (low complexity) spans 622 to 636; sequence NPHMMGGPHGNAGPH. Residues 640 to 656 are compositionally biased toward gly residues; it reads GHMGGVPGPGPGPGGMN. Residues 663 to 675 show a composition bias toward basic residues; the sequence is MSPHHGHPHHHHN. Over residues 678–711 the composition is skewed to gly residues; it reads GGPGPNMFGGGGGGPMGPGGPMGNMGPMGGGPMG. Residues 747–805 form a PHD-type zinc finger; sequence IYPCGMCHKEVNDNDEAVFCESGCNFFFHRTCVGLTEAAFQMLNKEVFAEWCCDKCVSS.

As to quaternary structure, binds to BCL9 via the PHD-type zinc finger motif, and thereby becomes part of the nuclear ARM/PAN complex. Ubiquitous throughout embryogenesis and larval development.

It localises to the nucleus. In terms of biological role, involved in signal transduction through the Wnt pathway. This chain is Protein pygopus (pygo), found in Drosophila melanogaster (Fruit fly).